A 130-amino-acid polypeptide reads, in one-letter code: MAKPIRKIGLRKGKRKIPKGVIHIQASFNNTIVTVTDIRGQVVSWSSAGACGFKGTRKSTPFAAQTAAENAIRTLIDQGMKQAEVMISGPGPGRETALRAIRRSGVVLSFVRDVTPMPHNGCRPPKKRRV.

The protein belongs to the universal ribosomal protein uS11 family. As to quaternary structure, part of the 30S ribosomal subunit.

The protein resides in the plastid. It localises to the chloroplast. The chain is Small ribosomal subunit protein uS11c from Angiopteris evecta (Mule's foot fern).